The chain runs to 1106 residues: Communication mutant protein F (1106 aa).

The first 28 residues, M1–A28, serve as a signal peptide directing secretion. The 127-residue stretch at T254–S380 folds into the G8 domain. N-linked (GlcNAc...) asparagine glycans are attached at residues N267, N306, N512, N536, N677, N715, and N833.

It belongs to the comF family.

It is found in the secreted. This chain is Communication mutant protein F (comF-1), found in Dictyostelium discoideum (Social amoeba).